Here is a 142-residue protein sequence, read N- to C-terminus: ATP synthase epsilon chain (142 aa).

Belongs to the ATPase epsilon chain family. In terms of assembly, F-type ATPases have 2 components, CF(1) - the catalytic core - and CF(0) - the membrane proton channel. CF(1) has five subunits: alpha(3), beta(3), gamma(1), delta(1), epsilon(1). CF(0) has three main subunits: a, b and c.

It localises to the cell inner membrane. Produces ATP from ADP in the presence of a proton gradient across the membrane. This is ATP synthase epsilon chain from Histophilus somni (strain 129Pt) (Haemophilus somnus).